The primary structure comprises 591 residues: Formate--tetrahydrofolate ligase (591 aa).

Residue 74–81 participates in ATP binding; it reads TPLGEGKS.

The protein belongs to the formate--tetrahydrofolate ligase family.

The enzyme catalyses (6S)-5,6,7,8-tetrahydrofolate + formate + ATP = (6R)-10-formyltetrahydrofolate + ADP + phosphate. Its pathway is one-carbon metabolism; tetrahydrofolate interconversion. This Desulforapulum autotrophicum (strain ATCC 43914 / DSM 3382 / VKM B-1955 / HRM2) (Desulfobacterium autotrophicum) protein is Formate--tetrahydrofolate ligase.